The sequence spans 336 residues: Fructokinase-2 (336 aa).

Belongs to the carbohydrate kinase PfkB family. In terms of tissue distribution, expressed in stem, sheaths, anthers, and panicles (at protein level).

It catalyses the reaction D-fructose + ATP = D-fructose 6-phosphate + ADP + H(+). It participates in glycan biosynthesis; starch biosynthesis. With respect to regulation, strongly inhibited at high fructose concentration. Its function is as follows. May play an important role in maintaining the flux of carbon towards starch formation in endosperm. May also be involved in a sugar-sensing pathway. The polypeptide is Fructokinase-2 (FRK2) (Oryza sativa subsp. japonica (Rice)).